Reading from the N-terminus, the 398-residue chain is MARGALDWIGAELEALDAKGLRRSLEPIGPAQGPVVQVGGRALVNLCSNDYLGLAADPRVRAAAADAAMRFGAGSGAARLVAGDLPPHGALEARLAAWKGREAALLFGSGYHANAGVPGALVGRDDAVFSDVLNHASIVDGCLLSRAELVRYRHCDVEELAGLLARTRARRKLVVTDAIFSMDGDAAPLRELAELCDRHGAMLYVDEAHAAGVLGPNGAGLAEALGVQDRVDVHMGTLGKALGAFGAYVAGERRLIELLVSRARPFVFSTALPPPACAAALAALEVVATEPSRRTHLFALCARMQAGLARLGFDVARVASPIFPVVLGTEARALAAAAALRERGWFVRAIRPPTVPHGTSRLRVALSAAHDAAQVDGFLAALAAVLPDLPPAGPRRAG.

Arginine 23 serves as a coordination point for substrate. Pyridoxal 5'-phosphate is bound at residue 110-111 (GY). Histidine 135 provides a ligand contact to substrate. Residues serine 181, histidine 209, and threonine 237 each coordinate pyridoxal 5'-phosphate. At lysine 240 the chain carries N6-(pyridoxal phosphate)lysine. Position 354 (threonine 354) interacts with substrate.

Belongs to the class-II pyridoxal-phosphate-dependent aminotransferase family. BioF subfamily. Homodimer. It depends on pyridoxal 5'-phosphate as a cofactor.

The enzyme catalyses 6-carboxyhexanoyl-[ACP] + L-alanine + H(+) = (8S)-8-amino-7-oxononanoate + holo-[ACP] + CO2. It participates in cofactor biosynthesis; biotin biosynthesis. Functionally, catalyzes the decarboxylative condensation of pimeloyl-[acyl-carrier protein] and L-alanine to produce 8-amino-7-oxononanoate (AON), [acyl-carrier protein], and carbon dioxide. The protein is 8-amino-7-oxononanoate synthase of Anaeromyxobacter dehalogenans (strain 2CP-1 / ATCC BAA-258).